The chain runs to 299 residues: Sulfate adenylyltransferase subunit 2 (299 aa).

Belongs to the PAPS reductase family. CysD subfamily. In terms of assembly, sulfate-activating enzymes, NodP and NodQ, may be physically associated.

The enzyme catalyses sulfate + ATP + H(+) = adenosine 5'-phosphosulfate + diphosphate. Proposed to provide activated sulfate for transfer to nod factor. The sequence is that of Sulfate adenylyltransferase subunit 2 (nodP) from Rhizobium tropici.